Here is a 414-residue protein sequence, read N- to C-terminus: 2,3-bisphosphoglycerate-independent phosphoglycerate mutase (414 aa).

The protein belongs to the BPG-independent phosphoglycerate mutase family. A-PGAM subfamily.

It catalyses the reaction (2R)-2-phosphoglycerate = (2R)-3-phosphoglycerate. Its pathway is carbohydrate degradation; glycolysis; pyruvate from D-glyceraldehyde 3-phosphate: step 3/5. Functionally, catalyzes the interconversion of 2-phosphoglycerate and 3-phosphoglycerate. The chain is 2,3-bisphosphoglycerate-independent phosphoglycerate mutase from Saccharolobus islandicus (strain M.14.25 / Kamchatka #1) (Sulfolobus islandicus).